The primary structure comprises 842 residues: Unconventional myosin-Ia (842 aa).

Positions glycine 1 to arginine 686 constitute a Myosin motor domain. An ATP-binding site is contributed by glycine 93–threonine 100. The interval valine 563–aspartate 585 is actin-binding. IQ domains are found at residues leucine 689–methionine 712, arginine 713–glycine 733, and isoleucine 735–arginine 764.

The protein belongs to the TRAFAC class myosin-kinesin ATPase superfamily. Myosin family. Phosphorylated by ALPK1.

In terms of biological role, involved in directing the movement of organelles along actin filaments. This is Unconventional myosin-Ia (Myo1a) from Rattus norvegicus (Rat).